The primary structure comprises 545 residues: Adenine deaminase (545 aa).

Belongs to the metallo-dependent hydrolases superfamily. Adenine deaminase family. Mn(2+) is required as a cofactor.

It catalyses the reaction adenine + H2O + H(+) = hypoxanthine + NH4(+). This is Adenine deaminase from Salinibacter ruber (strain DSM 13855 / M31).